A 174-amino-acid chain; its full sequence is Pectinesterase inhibitor 12 (174 aa).

Positions M1–A20 are cleaved as a signal peptide. 2 disulfides stabilise this stretch: C28-C43 and C100-C140. N-linked (GlcNAc...) asparagine glycosylation occurs at N129.

This sequence belongs to the PMEI family.

Its subcellular location is the secreted. The protein localises to the extracellular space. It localises to the apoplast. In terms of biological role, pectin methylesterase (PME) inhibitor involved in the maintenance of cell wall integrity in response to necrotrophic pathogens. Modulates PME activity and pectin methylesterification during infection by Botrytis cinerea and contributes to resistance against the pathogen. The sequence is that of Pectinesterase inhibitor 12 from Arabidopsis thaliana (Mouse-ear cress).